Consider the following 462-residue polypeptide: Probable Xaa-Pro aminopeptidase NECHADRAFT_60613 (462 aa).

Mn(2+) is bound by residues Asp259, Asp270, Glu393, and Glu433.

Belongs to the peptidase M24B family. It depends on Mn(2+) as a cofactor.

It catalyses the reaction Release of any N-terminal amino acid, including proline, that is linked to proline, even from a dipeptide or tripeptide.. Catalyzes the removal of a penultimate prolyl residue from the N-termini of peptides. This Fusarium vanettenii (strain ATCC MYA-4622 / CBS 123669 / FGSC 9596 / NRRL 45880 / 77-13-4) (Fusarium solani subsp. pisi) protein is Probable Xaa-Pro aminopeptidase NECHADRAFT_60613.